The sequence spans 358 residues: uncharacterized protein (358 aa).

The disordered stretch occupies residues M1–R47. Residues N18–G29 are compositionally biased toward basic residues.

It to M.leprae ML2427.

This is an uncharacterized protein from Mycobacterium tuberculosis (strain CDC 1551 / Oshkosh).